The following is a 217-amino-acid chain: 3,4-dihydroxy-2-butanone 4-phosphate synthase (217 aa).

D-ribulose 5-phosphate-binding positions include 37 to 38 (RE), Asp-42, 150 to 154 (RGGHT), and Glu-174. Glu-38 contributes to the Mg(2+) binding site. Mg(2+) is bound at residue His-153.

The protein belongs to the DHBP synthase family. In terms of assembly, homodimer. Mg(2+) serves as cofactor. Mn(2+) is required as a cofactor.

It catalyses the reaction D-ribulose 5-phosphate = (2S)-2-hydroxy-3-oxobutyl phosphate + formate + H(+). It participates in cofactor biosynthesis; riboflavin biosynthesis; 2-hydroxy-3-oxobutyl phosphate from D-ribulose 5-phosphate: step 1/1. Its function is as follows. Catalyzes the conversion of D-ribulose 5-phosphate to formate and 3,4-dihydroxy-2-butanone 4-phosphate. The chain is 3,4-dihydroxy-2-butanone 4-phosphate synthase from Pectobacterium atrosepticum (strain SCRI 1043 / ATCC BAA-672) (Erwinia carotovora subsp. atroseptica).